The following is a 225-amino-acid chain: PKHD-type hydroxylase YbiX (225 aa).

A Fe2OG dioxygenase domain is found at 78–177 (TLSTPLFNRY…RVASFMWIQS (100 aa)). Histidine 96, aspartate 98, and histidine 158 together coordinate Fe cation. Arginine 168 contributes to the 2-oxoglutarate binding site.

Fe(2+) is required as a cofactor. Requires L-ascorbate as cofactor.

The protein is PKHD-type hydroxylase YbiX of Shigella sonnei (strain Ss046).